A 360-amino-acid polypeptide reads, in one-letter code: GTP 3',8-cyclase 2 (360 aa).

In terms of domain architecture, Radical SAM core spans 33-259 (TFGRVANDLR…PDPAPRGSAP (227 aa)). Arginine 42 is a binding site for GTP. [4Fe-4S] cluster-binding residues include cysteine 49 and cysteine 53. Position 55 (tyrosine 55) interacts with S-adenosyl-L-methionine. Cysteine 56 lines the [4Fe-4S] cluster pocket. Residue arginine 93 coordinates GTP. Residue glycine 97 participates in S-adenosyl-L-methionine binding. Threonine 124 is a GTP binding site. Serine 148 lines the S-adenosyl-L-methionine pocket. Lysine 185 contacts GTP. Methionine 219 contributes to the S-adenosyl-L-methionine binding site. 2 residues coordinate [4Fe-4S] cluster: cysteine 287 and cysteine 290. 292 to 294 (RTR) contributes to the GTP binding site. Residue cysteine 304 participates in [4Fe-4S] cluster binding.

The protein belongs to the radical SAM superfamily. MoaA family. In terms of assembly, monomer and homodimer. Requires [4Fe-4S] cluster as cofactor.

The enzyme catalyses GTP + AH2 + S-adenosyl-L-methionine = (8S)-3',8-cyclo-7,8-dihydroguanosine 5'-triphosphate + 5'-deoxyadenosine + L-methionine + A + H(+). Its pathway is cofactor biosynthesis; molybdopterin biosynthesis. In terms of biological role, catalyzes the cyclization of GTP to (8S)-3',8-cyclo-7,8-dihydroguanosine 5'-triphosphate. The chain is GTP 3',8-cyclase 2 from Mycobacterium bovis (strain ATCC BAA-935 / AF2122/97).